Reading from the N-terminus, the 266-residue chain is rRNA adenine N-6-methyltransferase (266 aa).

S-adenosyl-L-methionine contacts are provided by His-14, Thr-16, Gly-41, Glu-62, Asp-87, and Asn-103.

This sequence belongs to the class I-like SAM-binding methyltransferase superfamily. rRNA adenine N(6)-methyltransferase family.

Involved in erythromycin resistance. The polypeptide is rRNA adenine N-6-methyltransferase (ermF) (Bacteroides fragilis).